The chain runs to 280 residues: Phosphatidylglycerol--prolipoprotein diacylglyceryl transferase (280 aa).

3 consecutive transmembrane segments (helical) span residues Leu19–Ala39, Ile56–Gln76, and Ile90–Ile110. Arg138 serves as a coordination point for a 1,2-diacyl-sn-glycero-3-phospho-(1'-sn-glycerol). 2 helical membrane passes run Leu204 to Gly224 and Ile236 to Tyr256.

The protein belongs to the Lgt family.

The protein resides in the cell membrane. The catalysed reaction is L-cysteinyl-[prolipoprotein] + a 1,2-diacyl-sn-glycero-3-phospho-(1'-sn-glycerol) = an S-1,2-diacyl-sn-glyceryl-L-cysteinyl-[prolipoprotein] + sn-glycerol 1-phosphate + H(+). It functions in the pathway protein modification; lipoprotein biosynthesis (diacylglyceryl transfer). In terms of biological role, catalyzes the transfer of the diacylglyceryl group from phosphatidylglycerol to the sulfhydryl group of the N-terminal cysteine of a prolipoprotein, the first step in the formation of mature lipoproteins. In Staphylococcus aureus (strain MRSA252), this protein is Phosphatidylglycerol--prolipoprotein diacylglyceryl transferase.